The primary structure comprises 204 residues: Facilitator of iron transport 3 (204 aa).

The first 18 residues, 1–18 (MKFSSALVLSAVAATALA), serve as a signal peptide directing secretion. Disordered stretches follow at residues 84 to 104 (SAAETSSAAETSSADEGSGSS) and 133 to 175 (EGSS…SSTA). Residues 135 to 175 (SSNTWSPSSTSTSSEAATSSASTTATTTAETSSSATSSSTA) are compositionally biased toward low complexity. The GPI-anchor amidated glycine moiety is linked to residue G182. A propeptide spans 183–204 (AADAITAGTGLMGAALAAVMLL) (removed in mature form).

The GPI-anchor is attached to the protein in the endoplasmic reticulum and serves to target the protein to the cell surface. There, the glucosamine-inositol phospholipid moiety is cleaved off and the GPI-modified mannoprotein is covalently attached via its lipidless GPI glycan remnant to the 1,6-beta-glucan of the outer cell wall layer.

Its subcellular location is the secreted. It localises to the cell wall. The protein localises to the membrane. Involved in the uptake of non-siderophore and siderophore sources of iron. Has a role in the retention of iron in the cell wall and periplasmic space. This Saccharomyces cerevisiae (strain ATCC 204508 / S288c) (Baker's yeast) protein is Facilitator of iron transport 3 (FIT3).